Reading from the N-terminus, the 212-residue chain is Ribonuclease P protein component 3 (212 aa).

This sequence belongs to the eukaryotic/archaeal RNase P protein component 3 family. As to quaternary structure, consists of a catalytic RNA component and at least 5 protein subunits. Forms a heterotetrameric subcomplex with Rnp2. Reconstituted enzyme missing individual protein subunits is suboptimally active, showing each subunit contributes to optimization of activity.

It localises to the cytoplasm. The enzyme catalyses Endonucleolytic cleavage of RNA, removing 5'-extranucleotides from tRNA precursor.. Part of ribonuclease P, a protein complex that generates mature tRNA molecules by cleaving their 5'-ends. Not absolutely essential for activity in vitro, however it strongly stimulates activity. Binds RNase P RNA. The sequence is that of Ribonuclease P protein component 3 from Pyrococcus horikoshii (strain ATCC 700860 / DSM 12428 / JCM 9974 / NBRC 100139 / OT-3).